Here is a 1091-residue protein sequence, read N- to C-terminus: TATA element modulatory factor (1091 aa).

Disordered regions lie at residues 42–86 (IPYG…KPVR) and 100–280 (FLSP…DAKS). The span at 57–81 (WDTSTWGLNSTSSEPQSPPTASQAI) shows a compositional bias: polar residues. A phosphoserine mark is found at Ser-73, Ser-78, Ser-112, and Ser-136. Composition is skewed to low complexity over residues 111-122 (KSPVVSKPPSKS), 131-142 (SSLQESSSPGQS), and 194-211 (SENV…TTST). Ser-213 carries the post-translational modification Phosphoserine. Positions 217–234 (ETKDMALEPKEQKHEDRQ) are enriched in basic and acidic residues. Composition is skewed to low complexity over residues 242 to 253 (VSSFSSGTSTTS) and 264 to 273 (ISESSASSRQ). Residues Ser-324, Ser-326, Ser-329, Ser-334, Ser-340, and Ser-357 each carry the phosphoserine modification. The segment at 329–338 (SLDSRSVSEI) is interaction with Elongin BC complex. Residues 360–443 (TPKTKVVEST…NQPKAPPEKE (84 aa)) are disordered. Residues 368–379 (STEENAEEEEGN) show a composition bias toward acidic residues. 2 positions are modified to phosphoserine: Ser-411 and Ser-540. Coiled coils occupy residues 443–767 (EDVC…STAR) and 824–894 (IQMS…SQLE). Phosphoserine is present on residues Ser-923 and Ser-926. Thr-927 is subject to Phosphothreonine. At Ser-931 the chain carries Phosphoserine. Positions 984 to 1090 (IENLQSQLKL…QIDELLRQRL (107 aa)) form a coiled coil.

In terms of assembly, component of the SNF/SWI transcription factor complexes. Interacts with RAB6A. Interacts with TCEB1. Interacts with STAT3 and FER. Interacts with TRNP1; may regulate TRNP1 proteasomal degradation. Phosphorylated by FER.

The protein localises to the cytoplasm. Its subcellular location is the nucleus. The protein resides in the golgi apparatus membrane. Functionally, potential coactivator of the androgen receptor. May play critical roles in two RAB6-dependent retrograde transport processes: one from endosomes to the Golgi and the other from the Golgi to the ER. Mediates STAT3 degradation. The chain is TATA element modulatory factor (Tmf1) from Mus musculus (Mouse).